Consider the following 300-residue polypeptide: Ubiquitin carboxyl-terminal hydrolase 2 (300 aa).

Residues 2 to 220 enclose the UCH catalytic domain; that stretch reads SWTTIESDAG…IRFNLMVICK (219 aa). Residue Cys-83 is the Nucleophile of the active site. His-159 acts as the Proton donor in catalysis. Residues 261–290 enclose the ULD domain; it reads NFVGLFVELSKLLVKDRIDKNTWNSTLETA.

It belongs to the peptidase C12 family. Component of the 26S proteasome. Interacts with rpn10.

Its subcellular location is the nucleus. It catalyses the reaction Thiol-dependent hydrolysis of ester, thioester, amide, peptide and isopeptide bonds formed by the C-terminal Gly of ubiquitin (a 76-residue protein attached to proteins as an intracellular targeting signal).. Ubiquitin-protein hydrolase is involved both in the processing of ubiquitin precursors and of ubiquitinated proteins. This enzyme is a thiol protease that recognizes and hydrolyzes a peptide bond at the C-terminal glycine of ubiquitin. This Schizosaccharomyces pombe (strain 972 / ATCC 24843) (Fission yeast) protein is Ubiquitin carboxyl-terminal hydrolase 2 (uch2).